The sequence spans 295 residues: MQPEGAEKGKSFKQRLVLKSSLAKETLSEFLGTFILIVLGCGCVAQAILSRGRFGGVITINVGFSMAVAMAIYVAGGVSGGHINPAVSLAMCLFGRMKWFKLPFYVGAQFLGAFVGAATVFGIYYDGLMSFAGGKLLIVGENATAHIFATYPAPYLSLANAFADQVVATMILLIIVFAIFDSRNLGAPRGLEPIAIGLLIIVIASSLGLNSGCAMNPARDLSPRLFTALAGWGFEVFRAGNNFWWIPVVGPLVGAVIGGLIYVLVIEIHHPEPDSVFKTEQSEDKPEKYELSVIM.

At 1–24 (MQPEGAEKGKSFKQRLVLKSSLAK) the chain is on the cytoplasmic side. The chain crosses the membrane as a helical span at residues 25–43 (ETLSEFLGTFILIVLGCGC). Topologically, residues 44 to 57 (VAQAILSRGRFGGV) are extracellular. The chain crosses the membrane as a helical span at residues 58 to 77 (ITINVGFSMAVAMAIYVAGG). Residues 78 to 79 (VS) lie on the Cytoplasmic side of the membrane. Positions 80-92 (GGHINPAVSLAMC) form an intramembrane region, discontinuously helical. An NPA 1 motif is present at residues 84–86 (NPA). The Cytoplasmic segment spans residues 93–98 (LFGRMK). The chain crosses the membrane as a helical span at residues 99–123 (WFKLPFYVGAQFLGAFVGAATVFGI). Residues 124 to 160 (YYDGLMSFAGGKLLIVGENATAHIFATYPAPYLSLAN) are Extracellular-facing. Residues 161–178 (AFADQVVATMILLIIVFA) form a helical membrane-spanning segment. Topologically, residues 179-190 (IFDSRNLGAPRG) are cytoplasmic. The helical transmembrane segment at 191–207 (LEPIAIGLLIIVIASSL) threads the bilayer. Over 208-210 (GLN) the chain is Extracellular. The segment at residues 211–225 (SGCAMNPARDLSPRL) is an intramembrane region (discontinuously helical). Positions 216 to 218 (NPA) match the NPA 2 motif. At 226-243 (FTALAGWGFEVFRAGNNF) the chain is on the extracellular side. The helical transmembrane segment at 244–264 (WWIPVVGPLVGAVIGGLIYVL) threads the bilayer. Residues 265-295 (VIEIHHPEPDSVFKTEQSEDKPEKYELSVIM) are Cytoplasmic-facing.

The protein belongs to the MIP/aquaporin (TC 1.A.8) family. In terms of assembly, homotetramer; each monomer provides an independent glycerol/water pore. Highly expressed in peripheral leukocytes. Also expressed in liver, lung, and spleen.

It localises to the cell membrane. The protein resides in the basolateral cell membrane. The enzyme catalyses glycerol(in) = glycerol(out). It carries out the reaction H2O(in) = H2O(out). The catalysed reaction is urea(in) = urea(out). It catalyses the reaction (S)-lactate(in) = (S)-lactate(out). The enzyme catalyses NH4(+)(in) = NH4(+)(out). It carries out the reaction uracil(in) = uracil(out). The catalysed reaction is adenine(out) = adenine(in). It catalyses the reaction 3-hydroxybutanoate(in) = 3-hydroxybutanoate(out). The enzyme catalyses D-sorbitol(in) = D-sorbitol(out). It carries out the reaction D-mannitol(in) = D-mannitol(out). The catalysed reaction is H2O2(out) = H2O2(in). It catalyses the reaction arsenite(in) = arsenite(out). The enzyme catalyses selenite(in) = selenite(out). In terms of biological role, aquaglyceroporins form homotetrameric transmembrane channels, with each monomer independently mediating glycerol and water transport across the plasma membrane along their osmotic gradient. AQP9 is the primary route for glycerol uptake in hepatocytes, supporting hepatic gluconeogenesis. It exhibits broad specificity and may transport various small, non-charged solutes, including carbamides, polyols, purines, and pyrimidines. AQP9 may also facilitate hepatic urea extrusion. Due to its permeability to lactate, AQP9 might participate in the astrocyte-to-neuron lactate shuttle, supplying neurons with energy. Additionally, AQP9 is permeable to arsenite, contributing to arsenic excretion by the liver and providing partial protection against arsenic toxicity. It is also permeable to H2O2 in vivo. Could also be permeable to ammonium. In Homo sapiens (Human), this protein is Aquaporin-9.